The following is a 509-amino-acid chain: ATP synthase subunit alpha (509 aa).

Glycine 169–threonine 176 is an ATP binding site.

It belongs to the ATPase alpha/beta chains family. In terms of assembly, F-type ATPases have 2 components, CF(1) - the catalytic core - and CF(0) - the membrane proton channel. CF(1) has five subunits: alpha(3), beta(3), gamma(1), delta(1), epsilon(1). CF(0) has three main subunits: a(1), b(2) and c(9-12). The alpha and beta chains form an alternating ring which encloses part of the gamma chain. CF(1) is attached to CF(0) by a central stalk formed by the gamma and epsilon chains, while a peripheral stalk is formed by the delta and b chains.

It localises to the cell inner membrane. The enzyme catalyses ATP + H2O + 4 H(+)(in) = ADP + phosphate + 5 H(+)(out). Produces ATP from ADP in the presence of a proton gradient across the membrane. The alpha chain is a regulatory subunit. This chain is ATP synthase subunit alpha, found in Methylobacterium nodulans (strain LMG 21967 / CNCM I-2342 / ORS 2060).